We begin with the raw amino-acid sequence, 360 residues long: METSNRKLDHLRITLLEDVEAGDTWLDFVKVPHRAVPELNLEEVVTEIEVFGKKLSAPLIVTGMTGGNEHAAKINAVIAEVVEELGLGMGVGSQRAAVERPELEWTFRIARERAPNALLIANLGAPQLLKGYGLEEIKKAIDMIDADAIAIHLNAAQESFQPEGDVDYKGLLNKLSELVDKVEKPIIIKETGAGLDYESVKALRELGIKAFDVSGSGGTSWVRVEMYRAREKGDEVLATVADWMSSWGIPTAASIMEARAAAPDALVIASGGIRDGLHAVKSLALGADLVGVALPALKAAYEGKEELKKFLKSMMLSIKIGLFLTGSPAPEHIKGKAIVLGPLKEWALERGIYEEWLRAR.

A substrate-binding site is contributed by 6 to 7 (RK). Residues Thr-62, 63–65 (GMT), Ser-93, and Asn-122 each bind FMN. 93–95 (SQR) is a binding site for substrate. Gln-157 serves as a coordination point for substrate. Glu-158 serves as a coordination point for Mg(2+). Residues Lys-189, Ser-214, Thr-219, 272–274 (GIR), and 293–294 (AL) each bind FMN.

It belongs to the IPP isomerase type 2 family. Homooctamer. Dimer of tetramers. Requires FMN as cofactor. The cofactor is NADPH. Mg(2+) is required as a cofactor.

The protein localises to the cytoplasm. It carries out the reaction isopentenyl diphosphate = dimethylallyl diphosphate. Its function is as follows. Involved in the biosynthesis of isoprenoids. Catalyzes the 1,3-allylic rearrangement of the homoallylic substrate isopentenyl (IPP) to its allylic isomer, dimethylallyl diphosphate (DMAPP). This chain is Isopentenyl-diphosphate delta-isomerase, found in Ignicoccus hospitalis (strain KIN4/I / DSM 18386 / JCM 14125).